Reading from the N-terminus, the 359-residue chain is Phosphate acyltransferase (359 aa).

A disordered region spans residues 338 to 359 (AGGVQSAPETEAPGAHPSPHVA).

It belongs to the PlsX family. Homodimer. Probably interacts with PlsY.

It localises to the cytoplasm. The catalysed reaction is a fatty acyl-[ACP] + phosphate = an acyl phosphate + holo-[ACP]. The protein operates within lipid metabolism; phospholipid metabolism. Functionally, catalyzes the reversible formation of acyl-phosphate (acyl-PO(4)) from acyl-[acyl-carrier-protein] (acyl-ACP). This enzyme utilizes acyl-ACP as fatty acyl donor, but not acyl-CoA. In Cupriavidus taiwanensis (strain DSM 17343 / BCRC 17206 / CCUG 44338 / CIP 107171 / LMG 19424 / R1) (Ralstonia taiwanensis (strain LMG 19424)), this protein is Phosphate acyltransferase.